The sequence spans 313 residues: Porphobilinogen deaminase (313 aa).

Cys242 carries the S-(dipyrrolylmethanemethyl)cysteine modification.

This sequence belongs to the HMBS family. As to quaternary structure, monomer. Requires dipyrromethane as cofactor.

The enzyme catalyses 4 porphobilinogen + H2O = hydroxymethylbilane + 4 NH4(+). It participates in porphyrin-containing compound metabolism; protoporphyrin-IX biosynthesis; coproporphyrinogen-III from 5-aminolevulinate: step 2/4. Its function is as follows. Tetrapolymerization of the monopyrrole PBG into the hydroxymethylbilane pre-uroporphyrinogen in several discrete steps. This chain is Porphobilinogen deaminase, found in Pseudomonas aeruginosa (strain LESB58).